Consider the following 108-residue polypeptide: Nucleoid-associated protein CHAB381_0200 (108 aa).

This sequence belongs to the YbaB/EbfC family. As to quaternary structure, homodimer.

Its subcellular location is the cytoplasm. It is found in the nucleoid. Its function is as follows. Binds to DNA and alters its conformation. May be involved in regulation of gene expression, nucleoid organization and DNA protection. This Campylobacter hominis (strain ATCC BAA-381 / DSM 21671 / CCUG 45161 / LMG 19568 / NCTC 13146 / CH001A) protein is Nucleoid-associated protein CHAB381_0200.